The following is a 157-amino-acid chain: Protein GrpE (157 aa).

Residues 1–10 show a composition bias toward basic and acidic residues; the sequence is MQEENQHPEQ. A disordered region spans residues 1–21; the sequence is MQEENQHPEQDDISEAQDAGA.

This sequence belongs to the GrpE family. As to quaternary structure, homodimer.

It localises to the cytoplasm. Functionally, participates actively in the response to hyperosmotic and heat shock by preventing the aggregation of stress-denatured proteins, in association with DnaK and GrpE. It is the nucleotide exchange factor for DnaK and may function as a thermosensor. Unfolded proteins bind initially to DnaJ; upon interaction with the DnaJ-bound protein, DnaK hydrolyzes its bound ATP, resulting in the formation of a stable complex. GrpE releases ADP from DnaK; ATP binding to DnaK triggers the release of the substrate protein, thus completing the reaction cycle. Several rounds of ATP-dependent interactions between DnaJ, DnaK and GrpE are required for fully efficient folding. The protein is Protein GrpE of Methylovorus sp. (strain SS1 / DSM 11726).